The following is a 434-amino-acid chain: MSEYRAVKGTKDIFPDEITSWKYIEGVIHRVVGLYGFQEIRTPVFEYTDLFQRSIGSTTDIVGKEMFSFRPEPDGRSVTLRPEMTAGVMRAFLQANLSSASPVHKLYYIAELFRKERPQAGRQRQFSQFGAEMLGASSPEAVAEVIDMMMQVFTSLGVSGLRLRINTLGDLDDRVRYRDALRAYLEPHSGLLDAPSRERLEKNPLRILDSKNPDIQSVIADAPKLHDFLNPSARAEFDQVLLYLDQKSIEYVIDPLLVRGLDYYCHTAFEVVSPELGAQDAIGGGGRYDGLARELGSKSDIPAVGFAVGMERLLITMEKQGLLRHIVPSGPRVYIVLQNEELKTHALSACDLLRRSGIRTEMDLCGRSMKAQMREANRQHADYALFVGKSEVESQAYGLKNLRTSEQDFLSIREMIARLASSTKHVEVPDGGPD.

The protein belongs to the class-II aminoacyl-tRNA synthetase family. As to quaternary structure, homodimer.

Its subcellular location is the cytoplasm. It catalyses the reaction tRNA(His) + L-histidine + ATP = L-histidyl-tRNA(His) + AMP + diphosphate + H(+). This is Histidine--tRNA ligase from Chlorobium phaeobacteroides (strain BS1).